We begin with the raw amino-acid sequence, 87 residues long: HssA/B-like protein 55 (87 aa).

Polar residues predominate over residues 1–13; the sequence is MTILSAITSISRP. The segment at 1-31 is disordered; the sequence is MTILSAITSISRPNKSSKSVVSSNGGSSLSM. Low complexity predominate over residues 14–31; it reads NKSSKSVVSSNGGSSLSM.

It belongs to the hssA/B family.

This chain is HssA/B-like protein 55 (hssl55), found in Dictyostelium discoideum (Social amoeba).